The sequence spans 420 residues: Dynein axonemal assembly factor 4 (420 aa).

The region spanning 3–87 is the CS domain; it reads VRVSEFSWQQ…KEPVLWDSLS (85 aa). The tract at residues 7–103 is mediates interaction with ESR1 and STUB1; that stretch reads EFSWQQTPAT…EMMQRIREKS (97 aa). Residues 164 to 192 are compositionally biased toward basic and acidic residues; sequence ECQKKADGQKRVQRKEKPLEGKQAEETKA. The tract at residues 164 to 212 is disordered; the sequence is ECQKKADGQKRVQRKEKPLEGKQAEETKALKPRGLPRKAPPTRLPTRGR. TPR repeat units lie at residues 288 to 321, 322 to 355, and 364 to 397; these read PDWLKDKGNKLFATENYLAAVDAYNLAIRLNCKI, PLLYLNRAACHLKLKNLHKAIEDSSKALELLTPP, and MKAHVRRGTAFCQLELYVEGLQDYEAALKIDPAN.

Interacts with ZMYND10. Interacts with ESR1 and ESR2. Interacts with STUB1. Interacts with DNAAF2. Interacts with CCT3, CCT4, CCT5 and CCT8. Interacts with DNAAF6/PIH1D3.

It is found in the nucleus. It localises to the cytoplasm. Its subcellular location is the dynein axonemal particle. The protein localises to the cell projection. The protein resides in the neuron projection. Functionally, involved in neuronal migration during development of the cerebral neocortex. May regulate the stability and proteasomal degradation of the estrogen receptors that play an important role in neuronal differentiation, survival and plasticity. Axonemal dynein assembly factor required for ciliary motility. This Mus musculus (Mouse) protein is Dynein axonemal assembly factor 4.